Here is a 404-residue protein sequence, read N- to C-terminus: Acetate kinase (404 aa).

Asn7 lines the Mg(2+) pocket. Lys14 is a binding site for ATP. A substrate-binding site is contributed by Arg95. Asp152 serves as the catalytic Proton donor/acceptor. Residues 212 to 216, 286 to 288, and 334 to 338 each bind ATP; these read HLGNG, DMR, and GIGEN. Glu388 is a Mg(2+) binding site.

The protein belongs to the acetokinase family. Homodimer. Mg(2+) is required as a cofactor. The cofactor is Mn(2+).

It is found in the cytoplasm. It catalyses the reaction acetate + ATP = acetyl phosphate + ADP. Its pathway is metabolic intermediate biosynthesis; acetyl-CoA biosynthesis; acetyl-CoA from acetate: step 1/2. Catalyzes the formation of acetyl phosphate from acetate and ATP. Can also catalyze the reverse reaction. This Lawsonia intracellularis (strain PHE/MN1-00) protein is Acetate kinase.